We begin with the raw amino-acid sequence, 481 residues long: ATP synthase subunit beta, chloroplastic (481 aa).

Gly-161–Thr-168 is a binding site for ATP.

This sequence belongs to the ATPase alpha/beta chains family. In terms of assembly, F-type ATPases have 2 components, CF(1) - the catalytic core - and CF(0) - the membrane proton channel. CF(1) has five subunits: alpha(3), beta(3), gamma(1), delta(1), epsilon(1). CF(0) has four main subunits: a(1), b(1), b'(1) and c(9-12).

It is found in the plastid. Its subcellular location is the chloroplast thylakoid membrane. The catalysed reaction is ATP + H2O + 4 H(+)(in) = ADP + phosphate + 5 H(+)(out). In terms of biological role, produces ATP from ADP in the presence of a proton gradient across the membrane. The catalytic sites are hosted primarily by the beta subunits. In Pylaiella littoralis (Seaweed), this protein is ATP synthase subunit beta, chloroplastic.